The following is a 78-amino-acid chain: Major outer membrane lipoprotein Lpp (78 aa).

Positions 1-20 (MKATKLVLGAVILGSTLLAG) are cleaved as a signal peptide. A lipid anchor (N-palmitoyl cysteine) is attached at cysteine 21. Cysteine 21 carries the S-diacylglycerol cysteine lipid modification. Repeats lie at residues 24–34 (NAKIDQLSSDV) and 38–48 (NAKVDQLSNDV). The stretch at 27 to 75 (IDQLSSDVQTLNAKVDQLSNDVNAMRSDVQAAKDDAARANQRLDNMATK) forms a coiled coil. Residue lysine 78 is modified to N6-murein peptidoglycan lysine.

It belongs to the Lpp family. In terms of assembly, homotrimer.

Its subcellular location is the cell outer membrane. It is found in the secreted. The protein localises to the cell wall. In terms of biological role, a highly abundant outer membrane lipoprotein that controls the distance between the inner and outer membranes. The only protein known to be covalently linked to the peptidoglycan network (PGN). Also non-covalently binds the PGN. The link between the cell outer membrane and PGN contributes to maintenance of the structural and functional integrity of the cell envelope, and maintains the correct distance between the PGN and the outer membrane. The sequence is that of Major outer membrane lipoprotein Lpp from Shigella flexneri.